The following is a 227-amino-acid chain: MNSINIAIDGPASSGKSTVAKIIAKNLNYTYLDTGAMYRCATYLALQHGYEAQDVSKILGLLAERPISFGKAEDGSQTVFLGTEEVTLAIRQNDVTNNVSWVSAIPEIREELVNQQRRIAKDGAIIMDGRDIGTVVLPDAELKIFLVASVDERAERRFKENQEKGIESDFETLKSEIAARDYKDSHREVSPLKAAEDAIEFDTTGVSIEGVVTFIQEKAEKIIDMKN.

ATP is bound at residue 10 to 18; it reads GPASSGKST.

This sequence belongs to the cytidylate kinase family. Type 1 subfamily.

Its subcellular location is the cytoplasm. It catalyses the reaction CMP + ATP = CDP + ADP. The catalysed reaction is dCMP + ATP = dCDP + ADP. The protein is Cytidylate kinase of Streptococcus agalactiae serotype V (strain ATCC BAA-611 / 2603 V/R).